Here is a 135-residue protein sequence, read N- to C-terminus: Small ribosomal subunit protein uS11 (135 aa).

A compositionally biased stretch (polar residues) spans 1-10 (MPPKTRSQTG). Positions 1-28 (MPPKTRSQTGAKKVRRKEKKNVAHGHAH) are disordered. A compositionally biased stretch (basic residues) spans 12-28 (KKVRRKEKKNVAHGHAH).

It belongs to the universal ribosomal protein uS11 family. In terms of assembly, part of the 30S ribosomal subunit. Interacts with proteins S7 and S18. Binds to IF-3.

Functionally, located on the platform of the 30S subunit, it bridges several disparate RNA helices of the 16S rRNA. Forms part of the Shine-Dalgarno cleft in the 70S ribosome. This is Small ribosomal subunit protein uS11 from Acidothermus cellulolyticus (strain ATCC 43068 / DSM 8971 / 11B).